Here is a 448-residue protein sequence, read N- to C-terminus: Pre-mRNA-splicing factor SAD1 (448 aa).

An N-acetylmethionine modification is found at methionine 1. The UBP-type; degenerate zinc-finger motif lies at 27–124; the sequence is PNYAYLETVV…NSIKFAAYPT (98 aa). 4 residues coordinate Zn(2+): cysteine 60, cysteine 63, histidine 79, and histidine 85. The USP domain occupies 150 to 447; it reads IGFTNAATYD…ETFIQVWEKQ (298 aa).

As to quaternary structure, component of the 45S U1.U2.U4/U6.U5 penta-snRNP particle, a subcomplex of the spliceosome.

Its subcellular location is the nucleus. Functionally, promotes the assembly of newly synthesized U4 snRNA into the U4/U6 snRNP particle. Required for splicing of pre-mRNA. The protein is Pre-mRNA-splicing factor SAD1 (SAD1) of Saccharomyces cerevisiae (strain ATCC 204508 / S288c) (Baker's yeast).